We begin with the raw amino-acid sequence, 203 residues long: FMN-dependent NADH:quinone oxidoreductase (203 aa).

Residues Ser9, Ser15–Ser17, and Ser138–Gly141 each bind FMN.

Belongs to the azoreductase type 1 family. In terms of assembly, homodimer. FMN is required as a cofactor.

It catalyses the reaction 2 a quinone + NADH + H(+) = 2 a 1,4-benzosemiquinone + NAD(+). The enzyme catalyses N,N-dimethyl-1,4-phenylenediamine + anthranilate + 2 NAD(+) = 2-(4-dimethylaminophenyl)diazenylbenzoate + 2 NADH + 2 H(+). Quinone reductase that provides resistance to thiol-specific stress caused by electrophilic quinones. Functionally, also exhibits azoreductase activity. Catalyzes the reductive cleavage of the azo bond in aromatic azo compounds to the corresponding amines. This chain is FMN-dependent NADH:quinone oxidoreductase, found in Methylorubrum extorquens (strain PA1) (Methylobacterium extorquens).